The following is a 492-amino-acid chain: Heat shock factor protein 4 (492 aa).

The DNA-binding element occupies 17-121 (VPAFLGKLWA…QLLERVRRKV (105 aa)). The interval 129 to 203 (GRWRPEDLGR…GPLQTGSSGA (75 aa)) is hydrophobic repeat HR-A/B. The tract at residues 245–323 (LPETTLGLSS…ECDFCVTAPP (79 aa)) is interactions with DUSP26, MAPK1 and MAPK2. The disordered stretch occupies residues 250–286 (LGLSSSHRTRGPIISDIHEDSPSPDGTRLSPSSGGRR). Lys294 is covalently cross-linked (Glycyl lysine isopeptide (Lys-Gly) (interchain with G-Cter in SUMO)). Ser299 carries the phosphoserine modification. The segment at 337 to 378 (KGNFSPEGPRNAQQPEPRGPREVPDRGTLGLDRGARSPENLL) is disordered. A hydrophobic repeat HR-C region spans residues 365 to 390 (LGLDRGARSPENLLPPMLLRAPPESV).

Belongs to the HSF family. In terms of assembly, homotrimer. Exhibits constitutive DNA binding and forms trimers even in the absence of stress. Interacts with ALKBH4, DUSP26, MAPK1, MAPK2, MAPK8 and MAP kinase p38. Post-translationally, phosphorylated mainly on serine residues. Phosphorylation on Ser-299 promotes sumoylation on Lys-294. Constitutively sumoylated. Sumoylation represses the transcriptional activity and is promoted by phosphorylation on Ser-299.

It is found in the nucleus. Its function is as follows. Heat-shock transcription factor that specifically binds heat shock promoter elements (HSE). Required for denucleation and organelle rupture and degradation that occur during eye lens terminal differentiation, when fiber cells that compose the lens degrade all membrane-bound organelles in order to provide lens with transparency to allow the passage of light. In this process, may regulate denucleation of lens fiber cells in part by activating DNASE2B transcription. May be involved in DNA repair through the transcriptional regulation of RAD51. May up-regulate p53/TP53 protein in eye lens fiber cells, possibly through protein stabilization. In the eye lens, controls the expression of alpha-crystallin B chain/CRYAB and consequently may be involved in the regulation of lysosomal acidification. This Canis lupus familiaris (Dog) protein is Heat shock factor protein 4 (HSF4).